The chain runs to 409 residues: Casein kinase I isoform delta-B (409 aa).

A Protein kinase domain is found at 9 to 277; sequence YRLGRKIGSG…YLRQLFRNLF (269 aa). ATP contacts are provided by residues 15–23 and K38; that span reads IGSGSFGDI. The active-site Proton acceptor is D128. Basic and acidic residues predominate over residues 300–315; that stretch reads TAEEADRERRERDERM. Positions 300–409 are disordered; sequence TAEEADRERR…NSIPFDHHGK (110 aa). Residues 317 to 341 are autoinhibitory; sequence HSRNPAARGIPAASGRPRPTQDGAP. Polar residues-rich tracts occupy residues 346–358 and 380–402; these read TPTS…SSPR and NVSS…QNSI.

This sequence belongs to the protein kinase superfamily. In terms of assembly, monomer. Interacts with per1 and per2. Component of the circadian core oscillator. Post-translationally, autophosphorylated on serine and threonine residues.

The protein resides in the cytoplasm. The protein localises to the nucleus. The enzyme catalyses L-seryl-[protein] + ATP = O-phospho-L-seryl-[protein] + ADP + H(+). The catalysed reaction is L-threonyl-[protein] + ATP = O-phospho-L-threonyl-[protein] + ADP + H(+). Its activity is regulated as follows. Exhibits substrate-dependent heparin activation. Functionally, casein kinases are operationally defined by their preferential utilization of acidic proteins such as caseins as substrates. Central component of the circadian clock. May act as a negative regulator of circadian rhythmicity by phosphorylating per1 and per2, which may lead to their degradation. Participates in wnt signaling. The protein is Casein kinase I isoform delta-B (csnk1db) of Danio rerio (Zebrafish).